The chain runs to 600 residues: MEFKIIAEYFDRLEKISSRLQLTSLLADLFKKTDKNVIDKVVYIIQGKLWPDFLGMPELGIGEKFLIRALSIATSVSDDEIEKMYKSVGDLGQVAFDIKQKQQSASILAFLGAQKASKPLTVEKVYDDLAKVATSTGEGSRDIKIRLLAGLLKDASPLEAKYLVRFVDGRLRVGIGDATILDALAITFGGGQNFRPIVERAYNLRADLGNIAKILANGGIEQLKNIKPQPGIPIRPMLAERLSDPAEMLSKVGNIALVDYKYDGERGQIHKAGDKIFIFSRRLENITNQYPDVAEYISKYVKGNEFIVEGEIIPVDPETGEMRPFQELMHRKRKSDIHEAIKEYPVNVFLFDLMYYEGEDYTVKPLSERRKKLESIVEDNDYVHIATHIITDNVEKLKEFFYQAISEGAEGVMVKSLAPDAIYQAGSRGWLWIKFKRDYQSEMADTVDLVMVGAFHGKGRKGGKYSSFLMAAYNPDKDVFETVCKVASGFTDAELDDLQKKIAELKRDTPHPRVVSTMVPDVWLTPALVAEIIGAEITISPLHTCCKDQYAEGGLSIRFPRFIRWRPDKSPEDATTNREILEMYKSQLKKIEEKPSDQSV.

D259 lines the ATP pocket. K261 acts as the N6-AMP-lysine intermediate in catalysis. Positions 266, 281, 311, 351, 428, and 434 each coordinate ATP.

The protein belongs to the ATP-dependent DNA ligase family. The cofactor is Mg(2+).

It catalyses the reaction ATP + (deoxyribonucleotide)n-3'-hydroxyl + 5'-phospho-(deoxyribonucleotide)m = (deoxyribonucleotide)n+m + AMP + diphosphate.. In terms of biological role, DNA ligase that seals nicks in double-stranded DNA during DNA replication, DNA recombination and DNA repair. This chain is DNA ligase, found in Acidianus ambivalens (Desulfurolobus ambivalens).